An 805-amino-acid chain; its full sequence is Replication restart protein PriA (805 aa).

Residues M1–A110 are 3'BD. A linker region spans residues K111–K166. The WH stretch occupies residues V167–D253. The 167-residue stretch at T282–L448 folds into the Helicase ATP-binding domain. Residue G295 to T302 coordinates ATP. Residues D391–H394 carry the DEAH box motif. Zn(2+)-binding residues include C510, C513, C519, C522, C537, C540, C550, and C553. The 155-residue stretch at P545–R699 folds into the Helicase C-terminal domain.

Belongs to the helicase family. PriA subfamily. In terms of assembly, monomer. Component of the replication restart primosome which assembles in this order; PriA, DnaD then DnaB. The preferred DNA substrate mimics an arrested DNA replication fork with unreplicated lagging strand. Interacts with DnaD but not DnaB. Interacts with SSB (sbbA) via the latter's 35 residue C-terminal tail which tethers PriA to ssDNA. Colocalizes with DNA pol III subunit gamma/tau (dnaX). May interact with RarA. The cofactor is Zn(2+).

Its subcellular location is the cytoplasm. The protein resides in the nucleoid. It carries out the reaction Couples ATP hydrolysis with the unwinding of duplex DNA by translocating in the 3'-5' direction.. It catalyses the reaction ATP + H2O = ADP + phosphate + H(+). In terms of biological role, initiates the restart of stalled replication forks, which reloads the replicative helicase on sites other than the origin of replication. Recognizes and binds to abandoned replication forks and remodels them to uncover a helicase loading site. Promotes assembly of the primosome at these replication forks. Serves as the initiating protein for assembly of the replication restart primosome; binding of PriA to an arrested DNA replication fork with unreplicated lagging strand triggers assembly. Sequentially DnaD (possibly as a dimer) and DnaB homotetramers bind. Assembly probably continues by loading of the DnaC replicative helicase aided by helicase loader DnaI. A single-strand (ss)DNA-dependent ATPase with helicase activity. Recognizes and binds the arrested nascent DNA chain at stalled replication forks. Binds forked DNA substrates and makes a larger complex with RarA; RarA has no effect on the helicase function. Binds ssDNA, D-loops and replication fork-like substrates but not double-stranded (ds)DNA; the preferred DNA substrate mimics an arrested DNA replication fork with an unreplicated lagging strand. Recognizes nicked dsDNA. A supershift on ssDNA occurs in the presence of single-stranded binding protein (SSB). Cannot substitute for E.coli PriA. Its function is as follows. Required for replication of plasmids that have a rolling circle mechanism, which produces circular single-stranded (ss)DNA intermediates corresponding to the lagging strand template, which are then converted into double-stranded (ds)DNA; priA is required to activate the conversion of ssDNA into dsDNA. The sequence is that of Replication restart protein PriA from Bacillus subtilis (strain 168).